Here is a 158-residue protein sequence, read N- to C-terminus: Putative pre-16S rRNA nuclease (158 aa).

The tract at residues E138–S158 is disordered.

Belongs to the YqgF nuclease family.

It localises to the cytoplasm. Could be a nuclease involved in processing of the 5'-end of pre-16S rRNA. The polypeptide is Putative pre-16S rRNA nuclease (Synechococcus sp. (strain CC9605)).